Reading from the N-terminus, the 197-residue chain is MLIGYVRVSTNDQNTDLQRNALVCAGCEQIFEDKLSGTRTDRPGLKRALKRLQKGDTLVVWKLDRLGRSMKHLISLVGELRERGINFRSLTDSIDTSSPMGRFFFHVMGALAEMERELIIERTMAGLAAARNKGRIGGRPPKLTKAEWEQAGRLLAQGIPRKQVALIYDVALSTLYKKHPAKRTHIENDDRINQIDR.

The region spanning 1 to 134 is the Resolvase/invertase-type recombinase catalytic domain; the sequence is MLIGYVRVST…AGLAAARNKG (134 aa). Catalysis depends on Ser9, which acts as the O-(5'-phospho-DNA)-serine intermediate. Residues 138-181 constitute a DNA-binding region (H-T-H motif); it reads GRPPKLTKAEWEQAGRLLAQGIPRKQVALIYDVALSTLYKKHPA.

Belongs to the site-specific recombinase resolvase family. Homodimer. During inversion, two dimers associate to form a homotetramer.

It is found in the host cytoplasm. Functionally, performs inversion of a viral segment (G-segment) that encodes two alternate pairs of tail fiber proteins thereby modifying the host specificity of the virus. Binds as a dimer to the viral gix sites which are 34-bp palindromic sequences that flank the invertible G-segment. Catalyzes site-specific recombination in the presence of the host factor Fis. Gin dimers bound to each of the gix sites and host factor Fis bound to the enhancer come together to form the synaptic complex. Each Gin monomer introduces a nick and becomes covalently attached to the 5'-phosphate of the DNA, resulting in double-stranded staggered breaks at both recombination sites. A 180 degrees rotation of one of the two Gin dimers followed by religation of the DNA leads to the inversion of the G-segment. This is Serine recombinase gin (gin) from Escherichia coli (Bacteriophage D108).